The sequence spans 332 residues: Anthranilate phosphoribosyltransferase (332 aa).

5-phospho-alpha-D-ribose 1-diphosphate contacts are provided by residues G79, 82-83, S87, 89-92, 107-115, and S119; these read GD, NIST, and KHGNRSVSS. Residue G79 participates in anthranilate binding. S91 provides a ligand contact to Mg(2+). N110 is a binding site for anthranilate. R165 provides a ligand contact to anthranilate. 2 residues coordinate Mg(2+): D223 and E224.

It belongs to the anthranilate phosphoribosyltransferase family. As to quaternary structure, homodimer. The cofactor is Mg(2+).

The catalysed reaction is N-(5-phospho-beta-D-ribosyl)anthranilate + diphosphate = 5-phospho-alpha-D-ribose 1-diphosphate + anthranilate. Its pathway is amino-acid biosynthesis; L-tryptophan biosynthesis; L-tryptophan from chorismate: step 2/5. In terms of biological role, catalyzes the transfer of the phosphoribosyl group of 5-phosphorylribose-1-pyrophosphate (PRPP) to anthranilate to yield N-(5'-phosphoribosyl)-anthranilate (PRA). This is Anthranilate phosphoribosyltransferase from Erwinia tasmaniensis (strain DSM 17950 / CFBP 7177 / CIP 109463 / NCPPB 4357 / Et1/99).